The chain runs to 507 residues: ATP synthase subunit alpha, chloroplastic (507 aa).

170–177 is an ATP binding site; the sequence is GDRQTGKT.

This sequence belongs to the ATPase alpha/beta chains family. F-type ATPases have 2 components, CF(1) - the catalytic core - and CF(0) - the membrane proton channel. CF(1) has five subunits: alpha(3), beta(3), gamma(1), delta(1), epsilon(1). CF(0) has four main subunits: a, b, b' and c.

It is found in the plastid. The protein localises to the chloroplast thylakoid membrane. It carries out the reaction ATP + H2O + 4 H(+)(in) = ADP + phosphate + 5 H(+)(out). In terms of biological role, produces ATP from ADP in the presence of a proton gradient across the membrane. The alpha chain is a regulatory subunit. The chain is ATP synthase subunit alpha, chloroplastic from Oenothera glazioviana (Large-flowered evening primrose).